A 154-amino-acid chain; its full sequence is Superoxide dismutase [Cu-Zn] (154 aa).

Residues His-47, His-49, and His-64 each contribute to the Cu cation site. A disulfide bridge links Cys-58 with Cys-147. Residues His-64, His-72, His-81, and Asp-84 each contribute to the Zn(2+) site. A Cu cation-binding site is contributed by His-121. The disordered stretch occupies residues 122–143 (GGTDDLGKGGNEESLKTGNAGP). Basic and acidic residues predominate over residues 123–136 (GTDDLGKGGNEESL). Arg-144 contributes to the substrate binding site.

The protein belongs to the Cu-Zn superoxide dismutase family. Homodimer. The cofactor is Cu cation. It depends on Zn(2+) as a cofactor.

The protein localises to the cytoplasm. It catalyses the reaction 2 superoxide + 2 H(+) = H2O2 + O2. Its function is as follows. Destroys radicals which are normally produced within the cells and which are toxic to biological systems. The polypeptide is Superoxide dismutase [Cu-Zn] (SOD1) (Cordyceps militaris (Caterpillar fungus)).